The primary structure comprises 296 residues: Pantothenate synthetase (296 aa).

ATP is bound at residue 31-38 (MGYLHEGH). His-38 acts as the Proton donor in catalysis. Position 62 (Gln-62) interacts with (R)-pantoate. A beta-alanine-binding site is contributed by Gln-62. 148-151 (GEKD) is a binding site for ATP. Residue Gln-154 coordinates (R)-pantoate. ATP-binding positions include Val-177 and 185–188 (LSSR).

Belongs to the pantothenate synthetase family. Homodimer.

It localises to the cytoplasm. The catalysed reaction is (R)-pantoate + beta-alanine + ATP = (R)-pantothenate + AMP + diphosphate + H(+). It functions in the pathway cofactor biosynthesis; (R)-pantothenate biosynthesis; (R)-pantothenate from (R)-pantoate and beta-alanine: step 1/1. Functionally, catalyzes the condensation of pantoate with beta-alanine in an ATP-dependent reaction via a pantoyl-adenylate intermediate. The polypeptide is Pantothenate synthetase (Deinococcus geothermalis (strain DSM 11300 / CIP 105573 / AG-3a)).